Consider the following 209-residue polypeptide: Uracil phosphoribosyltransferase (209 aa).

5-phospho-alpha-D-ribose 1-diphosphate contacts are provided by residues arginine 79, arginine 104, and 131–139; that span reads DPMLATGNS. Uracil-binding positions include isoleucine 194 and 199 to 201; that span reads GDA. Position 200 (aspartate 200) interacts with 5-phospho-alpha-D-ribose 1-diphosphate.

It belongs to the UPRTase family. Mg(2+) is required as a cofactor.

It carries out the reaction UMP + diphosphate = 5-phospho-alpha-D-ribose 1-diphosphate + uracil. Its pathway is pyrimidine metabolism; UMP biosynthesis via salvage pathway; UMP from uracil: step 1/1. Its activity is regulated as follows. Allosterically activated by GTP. In terms of biological role, catalyzes the conversion of uracil and 5-phospho-alpha-D-ribose 1-diphosphate (PRPP) to UMP and diphosphate. In Acidovorax ebreus (strain TPSY) (Diaphorobacter sp. (strain TPSY)), this protein is Uracil phosphoribosyltransferase.